Reading from the N-terminus, the 324-residue chain is Zinc transporter ZIP1 (324 aa).

Topologically, residues 1–30 are extracellular; it reads MGPWGEPELLVWRPEAVASEPPVPVGLEVK. The chain crosses the membrane as a helical span at residues 31-51; the sequence is LGALVLLLVLTLLCSLVPICV. At 52–68 the chain is on the cytoplasmic side; that stretch reads LRRPGANHEGSASRQKA. Residues 69 to 89 form a helical membrane-spanning segment; it reads LSLVSCFAGGVFLATCLLDLL. At 90–104 the chain is on the extracellular side; sequence PDYLAAIDEALAALH. The helical transmembrane segment at 105-125 threads the bilayer; sequence VTLQFPLQEFILAMGFFLVLV. The Cytoplasmic portion of the chain corresponds to 126–179; that stretch reads MEQITLAYKEQSGPSPLEETRALLGTVNGGPQHWHDGPGVPQASGAPATPSALR. The helical transmembrane segment at 180–200 threads the bilayer; it reads ACVLVFSLALHSVFEGLAVGL. Residues 201-206 are Extracellular-facing; sequence QRDRAR. A helical transmembrane segment spans residues 207-227; sequence AMELCLALLLHKGILAVSLSL. Over 228–237 the chain is Cytoplasmic; sequence RLLQSHLRAQ. Residues 238–258 traverse the membrane as a helical segment; sequence VVAGCGILFSCMTPLGIGLGA. Over 259 to 272 the chain is Extracellular; it reads ALAESAGPLHQLAQ. Residues 273 to 293 form a helical membrane-spanning segment; the sequence is SVLEGMAAGTFLYITFLEILP. Over 294–303 the chain is Cytoplasmic; sequence QELASSEQRI. The chain crosses the membrane as a helical span at residues 304-324; sequence LKVILLLAGFALLTGLLFIQI.

Belongs to the ZIP transporter (TC 2.A.5) family. As to expression, ubiquitous. Expressed in most adult and fetal tissues including the epidermis.

Its subcellular location is the cell membrane. The protein localises to the endoplasmic reticulum membrane. The enzyme catalyses Zn(2+)(in) = Zn(2+)(out). With respect to regulation, inhibited by Ni(2+) ions. Fe(2+) ions do not inhibit zinc uptake. In terms of biological role, transporter for the divalent cation Zn(2+). Mediates the influx of Zn(2+) into cells from extracellular space. Functions as the major importer of zinc from circulating blood plasma into prostate cells. The polypeptide is Zinc transporter ZIP1 (Homo sapiens (Human)).